Consider the following 801-residue polypeptide: Protein ACCUMULATION AND REPLICATION OF CHLOROPLASTS 6, chloroplastic (801 aa).

The transit peptide at 1-67 directs the protein to the chloroplast; it reads MEALSHVGIG…SSSFATATTT (67 aa). Topologically, residues 68–618 are stromal; that stretch reads ATLVSPPPSI…ADMLKEASVK (551 aa). Residues 89–153 form the J domain; the sequence is DFYQVLGAQT…RSRREYNEGL (65 aa). The helical transmembrane segment at 619–638 threads the bilayer; the sequence is ILAAGVAIGLISLFSQKYFL. Over 639 to 801 the chain is Chloroplast intermembrane; the sequence is KSSSSFQRKD…KITEGSVLAS (163 aa). The tract at residues 639-801 is interaction with PDV2; the sequence is KSSSSFQRKD…KITEGSVLAS (163 aa).

As to quaternary structure, self-interacts. Part of a complex made of ARC3, ARC6, FTSZ1 and FTSZ2. Interacts with FTSZ2-1 and FTSZ2-2 (via C-terminus), but not with FTSZ1; this interaction enables ARC3 binding to FTSZ2. Binds to CDT1A. Interacts (via C-terminus) with PDV2 (via C-terminus) in the chloroplast intermembrane space; this interaction induces homodimerization and leads to the formation of a heterotetramer containing two ARC6 and two PDV2 subunits. Interacts with MCD1 in the chloroplast stroma and facilitates its subsequent binding to FtsZ2-1. Interacts (via J domain) with CJD1 (via J-like domain). Mostly expressed in young leaves.

It is found in the plastid. The protein localises to the chloroplast inner membrane. Component of the plastid division machinery consisting in a binary fission accomplished by the simultaneous constriction of the FtsZ ring on the stromal side of the inner envelope membrane, and the ARC5 ring on the cytosolic side of the outer envelope membrane. Involved in the initiation of proplastid and plastid division (including chloroplasts, statoliths and leukoplasts). Promotes the assembly and/or stabilization of the plastid-dividing FtsZ ring, functioning as an antagonistic regulator of FtsZ dynamics against CDP1 and facilitating MCD1 positioning to membrane tethered FtsZ filaments to form the chloroplast Z-Ring; inhibits GDP-induced disassembly of FTSZ2 but enables ARC3 binding to FTSZ2-1. Relays plastid division site position between stroma and outer surface via interactions with the stromal FtsZ ring and the outer membrane PDV2 that recruits cytoplasmic ARC5 ring. Required for plastid equatorial positioning of PDV2 and ARC5. May contribute to gravitropism in stems and hypocotyls. Seems to influence stromule (stroma-filled tubular extensions of the plastid envelope membrane) length and frequency. The polypeptide is Protein ACCUMULATION AND REPLICATION OF CHLOROPLASTS 6, chloroplastic (Arabidopsis thaliana (Mouse-ear cress)).